We begin with the raw amino-acid sequence, 139 residues long: Protein Turandot B (139 aa).

The N-terminal stretch at 1-21 (MNFNMSMICFALLLIVTLCSA) is a signal peptide.

Belongs to the Turandot family.

Its subcellular location is the secreted. Its function is as follows. A humoral factor that may play a role in stress tolerance. The protein is Protein Turandot B of Drosophila yakuba (Fruit fly).